Consider the following 310-residue polypeptide: MPLRLVFMGTPEFAVPTLLALAAHGHDIAAVYTREPKPAGRGMKLQETAVALAAHRLQAPVLTPKTLRTDEALANFRAHEADAAVVVAYGMILPQAILDAPELGCYNLHGSLLPRWRGAAPLNRAIMAGDAETGVMVMKMDAGLDTGDVAMAERIAITDAMTVTDVHDQLARLGADLMVRAMAALERGGLQLTKQSEDGVTYAAKIDKAEAKIDFAKPTRAVLRHIHGLSPFPGAWCELPIEGQPVRIKVLRCAIADGRGEPGEVIDDHLTIACGDGAIRVSQLQRAGKQPMTAEEFLRGTPIAKGVRVG.

Position 111–114 (S111–P114) interacts with (6S)-5,6,7,8-tetrahydrofolate.

Belongs to the Fmt family.

The catalysed reaction is L-methionyl-tRNA(fMet) + (6R)-10-formyltetrahydrofolate = N-formyl-L-methionyl-tRNA(fMet) + (6S)-5,6,7,8-tetrahydrofolate + H(+). Attaches a formyl group to the free amino group of methionyl-tRNA(fMet). The formyl group appears to play a dual role in the initiator identity of N-formylmethionyl-tRNA by promoting its recognition by IF2 and preventing the misappropriation of this tRNA by the elongation apparatus. The polypeptide is Methionyl-tRNA formyltransferase (Rhodopseudomonas palustris (strain ATCC BAA-98 / CGA009)).